We begin with the raw amino-acid sequence, 449 residues long: UDP-N-acetylmuramoylalanine--D-glutamate ligase (449 aa).

118-124 (GTNGKTT) is an ATP binding site.

This sequence belongs to the MurCDEF family.

Its subcellular location is the cytoplasm. The enzyme catalyses UDP-N-acetyl-alpha-D-muramoyl-L-alanine + D-glutamate + ATP = UDP-N-acetyl-alpha-D-muramoyl-L-alanyl-D-glutamate + ADP + phosphate + H(+). The protein operates within cell wall biogenesis; peptidoglycan biosynthesis. Its function is as follows. Cell wall formation. Catalyzes the addition of glutamate to the nucleotide precursor UDP-N-acetylmuramoyl-L-alanine (UMA). The chain is UDP-N-acetylmuramoylalanine--D-glutamate ligase from Staphylococcus aureus (strain MW2).